A 306-amino-acid polypeptide reads, in one-letter code: MNYNCEIQNRNSKNVDNQVSLPPIQVLFNSIEKRSMPELAFSNIEYSHGNLRSSTEEQNYPAPVLLPQHHSIAYPAINSGGTSTTATPTASTVETSKTSSSAMDTQSQYGSSKKSKSASDDAKPCYKSAPIYEIINKEKDAGAQYNRPFSDFVESKSRRKQNSGRRSNLPKETVQILNTWLLNHLNNPYPTQQEKRELLIKTGLTKIQLSNWFINVRRRKIFSDYYTLVNSIPNDNANNTPVERVQNVSAYHNTLSATNNTMYDATSTCSTDYELSKRFAHAPVTRRKKLIDRLEELKKLSNPDMN.

Residues P75–K123 form a disordered region. Residues S79 to S96 are compositionally biased toward low complexity. The span at K97–G110 shows a compositional bias: polar residues. Positions N162–D224 form a DNA-binding region, homeobox; TALE-type.

It belongs to the TALE/CUP9 homeobox family.

The protein resides in the nucleus. Probable DNA-binding protein which plays a role in protecting yeast cells against copper toxicity. May regulate the expression of important copper homeostatic genes. The protein is Homeobox protein CUP9 (CUP9) of Saccharomyces cerevisiae (strain ATCC 204508 / S288c) (Baker's yeast).